The following is a 150-amino-acid chain: Protein SprT-like (150 aa).

The SprT-like domain occupies 11 to 149 (ELVDKLSLTY…CGKCRGSLKE (139 aa)). H70 contacts Zn(2+). Residue E71 is part of the active site. Zn(2+) is bound at residue H74.

Belongs to the SprT family. It depends on Zn(2+) as a cofactor.

It is found in the cytoplasm. In Oceanobacillus iheyensis (strain DSM 14371 / CIP 107618 / JCM 11309 / KCTC 3954 / HTE831), this protein is Protein SprT-like.